A 458-amino-acid polypeptide reads, in one-letter code: Kelch repeat and BTB domain-containing protein 13 (458 aa).

The BTB domain occupies Thr7–Ala74. Kelch repeat units lie at residues Ala159–Asn209, Lys210–Gly258, Arg259–Gly305, Leu307–Arg350, and Ser352–Gly400.

Component of the BCR(KBTBD13) E3 ubiquitin ligase complex, at least composed of CUL3 and KBTBD13 and RBX1. Interacts with CUL3. In terms of processing, autoubiquitinated. As to expression, expressed in skeletal muscle.

Its subcellular location is the cytoplasm. It participates in protein modification; protein ubiquitination. Its function is as follows. Substrate-specific adapter of a BCR (BTB-CUL3-RBX1) E3 ubiquitin ligase complex. The chain is Kelch repeat and BTB domain-containing protein 13 (KBTBD13) from Homo sapiens (Human).